A 482-amino-acid polypeptide reads, in one-letter code: Glutamate--tRNA ligase 1 (482 aa).

A 'HIGH' region motif is present at residues 18-28; the sequence is PSPTGYLHLGG. The short motif at 252–256 is the 'KMSKS' region element; it reads KLSKR. K255 is an ATP binding site.

This sequence belongs to the class-I aminoacyl-tRNA synthetase family. Glutamate--tRNA ligase type 1 subfamily. In terms of assembly, monomer.

The protein localises to the cytoplasm. It catalyses the reaction tRNA(Glu) + L-glutamate + ATP = L-glutamyl-tRNA(Glu) + AMP + diphosphate. Its function is as follows. Catalyzes the attachment of glutamate to tRNA(Glu) in a two-step reaction: glutamate is first activated by ATP to form Glu-AMP and then transferred to the acceptor end of tRNA(Glu). This chain is Glutamate--tRNA ligase 1, found in Erythrobacter litoralis (strain HTCC2594).